We begin with the raw amino-acid sequence, 371 residues long: GDP-mannose 3,5-epimerase 2 (371 aa).

NAD(+) contacts are provided by residues 29–55 (GAGG…SDWK), D53, and D73. Residues G98 and 138 to 140 (SAC) each bind substrate. Positions 168 and 172 each coordinate NAD(+). Y168 serves as the catalytic Proton acceptor. Residues N197, 210–212 (EKA), K219, 235–237 (QTR), R300, and S350 contribute to the substrate site.

This sequence belongs to the NAD(P)-dependent epimerase/dehydratase family. Requires NAD(+) as cofactor.

The enzyme catalyses GDP-alpha-D-mannose = GDP-beta-L-gulose. It catalyses the reaction GDP-beta-L-gulose = GDP-beta-L-galactose. The protein operates within cofactor biosynthesis; L-ascorbate biosynthesis via GDP-alpha-D-mannose pathway; L-ascorbate from GDP-alpha-D-mannose: step 1/5. Its function is as follows. Catalyzes a reversible epimerization of GDP-D-mannose that precedes the committed step in the biosynthesis of vitamin C (L-ascorbate), resulting in the hydrolysis of the highly energetic glycosyl-pyrophosphoryl linkage. Able to catalyze 2 distinct epimerization reactions and can release both GDP-L-galactose and GDP-L-gulose from GDP-mannose. The sequence is that of GDP-mannose 3,5-epimerase 2 (GME-2) from Oryza sativa subsp. japonica (Rice).